The primary structure comprises 209 residues: Transcription factor 23 (209 aa).

Disordered stretches follow at residues 1–20 (MSQE…GHNK) and 54–85 (LSRA…ARER). The segment covering 72–85 (GRSEASPENAARER) has biased composition (basic and acidic residues). The bHLH domain occupies 75 to 127 (EASPENAARERTRVKTLRQAFLALQAALPAVPPDTKLSKLDVLVLATSYIAHL).

Forms inactive heterodimeric complex with TCF3. As to expression, highly expressed in the uterus (predominantly in myometrium), ovary, and testis. Expression in the uterus is higher in the diestrus phase than in the estrus phase and reaches a maximum at 7.5 dpc. Expression declines towards the time of delivery and returns to the non-pregnant level 4 days after delivery. Low expression seen in lung, heart, intestine, and spleen.

It localises to the nucleus. In terms of biological role, inhibits E-box-mediated binding and transactivation of bHLH factors. Inhibitory effect is similar to that of ID proteins. Inhibits the formation of TCF3 and MYOD1 homodimers and heterodimers. Lacks DNA binding activity. May be involved in the regulation or modulation of smooth muscle contraction of the uterus during pregnancy and particularly around the time of delivery. Seems to play a role in the inhibition of myogenesis. The chain is Transcription factor 23 (Tcf23) from Mus musculus (Mouse).